We begin with the raw amino-acid sequence, 349 residues long: Pinopsin (349 aa).

Positions 1 to 16 (MDPTNSPQEPPHTSTP) are enriched in polar residues. Residues 1–22 (MDPTNSPQEPPHTSTPGPFDGP) form a disordered region. The Extracellular portion of the chain corresponds to 1–32 (MDPTNSPQEPPHTSTPGPFDGPQWPHQAPRGM). Residues 33-57 (YLSVAVLMGIVVISASVVNGLVIVV) traverse the membrane as a helical segment. Over 58–69 (SIRYKKLRSPLN) the chain is Cytoplasmic. A helical membrane pass occupies residues 70-94 (YILVNLAMADLLVTLCGSSVSFSNN). Residues 95-109 (INGFFVFGKRLCELE) are Extracellular-facing. Cys-106 and Cys-183 are joined by a disulfide. The helical transmembrane segment at 110 to 129 (GFMVSLTGIVGLWSLAILAL) threads the bilayer. Topologically, residues 130–148 (ERYVVVCRPLGDFRFQHRH) are cytoplasmic. A helical membrane pass occupies residues 149 to 172 (AVTGCAFTWVWSLLWTTPPLLGWS). Residues 173-196 (SYVPEGLRTSCGPNWYTGGSNNNS) are Extracellular-facing. Asn-194 carries N-linked (GlcNAc...) asparagine glycosylation. Residues 197 to 224 (YILTLFVTCFVMPLSLILFSYANLLMTL) form a helical membrane-spanning segment. The Cytoplasmic segment spans residues 225–246 (RAAAAQQQESDTTQQAERQVTR). The helical transmembrane segment at 247–270 (MVVAMVMAFLICWLPYTTFALVVA) threads the bilayer. Topologically, residues 271–278 (TNKDIAIQ) are extracellular. The helical transmembrane segment at 279–303 (PALASLPSYFSKTATVYNPIIYVFM) threads the bilayer. N6-(retinylidene)lysine is present on Lys-290. The Cytoplasmic segment spans residues 304 to 349 (NKQFQSCLLKMLCCGHHPRGTGRTAPAAPASPTDGLRNKVTPSHPV). S-palmitoyl cysteine attachment occurs at residues Cys-316 and Cys-317. The interval 325–349 (GRTAPAAPASPTDGLRNKVTPSHPV) is disordered.

It belongs to the G-protein coupled receptor 1 family. Opsin subfamily. Phosphorylated on some or all of the serine and threonine residues present in the C-terminal region. Pineal gland.

Its subcellular location is the membrane. In terms of biological role, produces a slow and prolonged phototransduction response consistent with the non-visual function of pineal photoreception. The protein is Pinopsin of Columba livia (Rock dove).